We begin with the raw amino-acid sequence, 178 residues long: Peptide methionine sulfoxide reductase MsrA (178 aa).

The active site involves Cys-14.

This sequence belongs to the MsrA Met sulfoxide reductase family.

The enzyme catalyses L-methionyl-[protein] + [thioredoxin]-disulfide + H2O = L-methionyl-(S)-S-oxide-[protein] + [thioredoxin]-dithiol. The catalysed reaction is [thioredoxin]-disulfide + L-methionine + H2O = L-methionine (S)-S-oxide + [thioredoxin]-dithiol. Functionally, has an important function as a repair enzyme for proteins that have been inactivated by oxidation. Catalyzes the reversible oxidation-reduction of methionine sulfoxide in proteins to methionine. The polypeptide is Peptide methionine sulfoxide reductase MsrA (Bacillus pumilus (strain SAFR-032)).